An 874-amino-acid chain; its full sequence is Pentatricopeptide repeat-containing protein At2g17140 (874 aa).

PPR repeat units follow at residues 111-145 (SVYLYNLLLESCIKERRVEFVSWLYKDMVLCGIAP), 146-180 (QTYTFNLLIRALCDSSCVDAARELFDEMPEKGCKP), 181-215 (NEFTFGILVRGYCKAGLTDKGLELLNAMESFGVLP), 216-250 (NKVIYNTIVSSFCREGRNDDSEKMVEKMREEGLVP), 251-285 (DIVTFNSRISALCKEGKVLDASRIFSDMELDEYLG), 290-320 (NSITYNLMLKGFCKVGLLEDAKTLFESIREN), 325-359 (SLQSYNIWLQGLVRHGKFIEAETVLKQMTDKGIGP), 360-394 (SIYSYNILMDGLCKLGMLSDAKTIVGLMKRNGVCP), 395-429 (DAVTYGCLLHGYCSVGKVDAAKSLLQEMMRNNCLP), 430-464 (NAYTCNILLHSLWKMGRISEAEELLRKMNEKGYGL), 465-499 (DTVTCNIIVDGLCGSGELDKAIEIVKGMRVHGSAA), 523-557 (DLITYSTLLNGLCKAGRFAEAKNLFAEMMGEKLQP), 558-592 (DSVAYNIFIHHFCKQGKISSAFRVLKDMEKKGCHK), 593-627 (SLETYNSLILGLGIKNQIFEIHGLMDEMKEKGISP), 628-662 (NICTYNTAIQYLCEGEKVEDATNLLDEMMQKNIAP), 663-693 (NVFSFKYLIEAFCKVPDFDMAQEVFETAVSI), 697-731 (KEGLYSLMFNELLAAGQLLKATELLEAVLDRGFEL), 732-766 (GTFLYKDLVESLCKKDELEVASGILHKMIDRGYGF), and 767-797 (DPAALMPVIDGLGKMGNKKEANSFADKMMEM).

This sequence belongs to the PPR family. P subfamily.

The protein is Pentatricopeptide repeat-containing protein At2g17140 of Arabidopsis thaliana (Mouse-ear cress).